An 868-amino-acid chain; its full sequence is E3 ubiquitin-protein ligase TRIM71 (868 aa).

A2 carries the post-translational modification N-acetylalanine. The RING-type zinc-finger motif lies at 12–89; the sequence is CLLCKEMCGS…PLKLRCPVCD (78 aa). Over residues 26 to 41 the composition is skewed to low complexity; it reads SSNSSASSSSSQTSTS. Disordered stretches follow at residues 26–50 and 121–186; these read SSNS…GGPG and ADEP…GSPS. A compositionally biased stretch (basic residues) spans 142-153; sequence SNHRHHAHHAHP. Positions 159 to 176 are enriched in pro residues; the sequence is APPPPLPPAPPPPAPPRS. Residues 177–186 are compositionally biased toward low complexity; sequence APGGPAGSPS. The B box-type 1; atypical zinc-finger motif lies at 191–238; that stretch reads RRPHGCSSCDEGNAASSRCLDCQEHLCDNCVRAHQRVRLTKDHYIERG. A B box-type 2 zinc finger spans residues 273 to 314; sequence ERLGFCQHHDDEVLHLYCDTCSVPICRECTVGRHGGHSFVYL. The Zn(2+) site is built by C278, H281, C301, and H306. Residues 391 to 427 adopt a coiled-coil conformation; the sequence is QVKAKSLYLQVEKLRQNLNKLESTISAVQQVLEEGRA. A Filamin repeat occupies 479–580; that stretch reads SSGAFAPLTK…IENSPFKVVV (102 aa). NHL repeat units follow at residues 593–636, 640–683, 687–730, 734–777, 781–824, and 828–868; these read GLSF…FKPC, HHKF…FTFE, LLKF…FGPD, LNKY…IHPD, ARFL…FESN, and LCKF…ILIF.

This sequence belongs to the TRIM/RBCC family. Interacts (via NHL repeats) with AGO2; the interaction increases in presence of RNA. Interacts with HSP90AA1. Interacts (via NHL repeats) with MOV10, PABPC1, PUM1, PUM2, STAU2, XRN1 and XRN2 in an RNA-dependent manner. Interacts with SHCBP1; leading to enhance its stability. In terms of processing, autoubiquitinated.

The protein localises to the cytoplasm. It localises to the P-body. The catalysed reaction is S-ubiquitinyl-[E2 ubiquitin-conjugating enzyme]-L-cysteine + [acceptor protein]-L-lysine = [E2 ubiquitin-conjugating enzyme]-L-cysteine + N(6)-ubiquitinyl-[acceptor protein]-L-lysine.. It participates in protein modification; protein ubiquitination. Its function is as follows. E3 ubiquitin-protein ligase that cooperates with the microRNAs (miRNAs) machinery and promotes embryonic stem cells proliferation and maintenance. Binds to miRNAs and associates with AGO2, participating in post-transcriptional repression of transcripts such as CDKN1A. In addition, participates in post-transcriptional mRNA repression in a miRNA independent mechanism. Facilitates the G1-S transition to promote rapid embryonic stem cell self-renewal by repressing CDKN1A expression. Required to maintain proliferation and prevent premature differentiation of neural progenitor cells during early neural development: positively regulates FGF signaling by controlling the stability of SHCBP1. Specific regulator of miRNA biogenesis. Binds to miRNA MIR29A hairpin and postranscriptionally modulates MIR29A levels, which indirectly regulates TET proteins expression. In Bos taurus (Bovine), this protein is E3 ubiquitin-protein ligase TRIM71 (TRIM71).